Reading from the N-terminus, the 199-residue chain is Ribonuclease HI (199 aa).

A not required for RNase H activity region spans residues 1-68; it reads MPVVECDIQT…TAVVQPDRGG (68 aa). An RNase H type-1 domain is found at 66–197; the sequence is RGGRVHAYFD…ADALANEALD (132 aa). Positions 69–199 are as active as intact RNase H; sequence RVHAYFDGAS…ALANEALDDA (131 aa). Mg(2+) contacts are provided by Asp75, Glu115, Asp139, and Asp189. Residues Asp75, Glu115, Asp139, and Asp189 each coordinate Mn(2+).

It belongs to the RNase H family. The cofactor is Mn(2+). It depends on Mg(2+) as a cofactor. Co(2+) serves as cofactor. Requires Ni(2+) as cofactor.

The protein resides in the cytoplasm. It carries out the reaction Endonucleolytic cleavage to 5'-phosphomonoester.. Nuclease that specifically degrades the RNA of RNA-DNA hybrids; seems to act exonucleolytically on RNA/DNA hybrids. Endonucleolytically removes RNA primers from the Okazaki fragments of lagging strand synthesis on its own. Complements the temperature-sensitive phenotype of an E.coli double rnhA/rnhB (RNase H) disruption mutant. In Halobacterium salinarum (strain ATCC 700922 / JCM 11081 / NRC-1) (Halobacterium halobium), this protein is Ribonuclease HI (rnhA).